Reading from the N-terminus, the 406-residue chain is Peptide transporter imqD (406 aa).

Residues Met1–Ser25 are disordered. Over residues Ser14–Ser25 the composition is skewed to low complexity. The next 6 membrane-spanning stretches (helical) occupy residues Gly184–Ala204, Ile220–Ile240, Ala262–Ile282, Val309–Thr329, Ala344–Ile364, and Leu373–Ile393.

This sequence belongs to the major facilitator superfamily. Proton-dependent oligopeptide transporter (POT/PTR) (TC 2.A.17) family.

The protein localises to the membrane. Its function is as follows. Peptide transporter; part of the gene cluster that mediates the biosynthesis of imizoquins A to D, tripeptide-derived alkaloids that serve a protective role against oxidative stress that are essential for normal germination. The protein is Peptide transporter imqD of Aspergillus flavus (strain ATCC 200026 / FGSC A1120 / IAM 13836 / NRRL 3357 / JCM 12722 / SRRC 167).